A 909-amino-acid chain; its full sequence is Disintegrin and metalloproteinase domain-containing protein 12 (909 aa).

The signal sequence occupies residues 1–28 (MAARPLPVSPARALLLALAGALLAPCEA). A propeptide spanning residues 29 to 207 (RGVSLWNQGR…SQTWARRHKR (179 aa)) is cleaved from the precursor. N-linked (GlcNAc...) asparagine glycosylation is found at asparagine 111 and asparagine 149. The short motif at 177–184 (GSCGSHHN) is the Cysteine switch element. Residues cysteine 179 and histidine 350 each coordinate Zn(2+). Over 208–708 (ETLKATKYVE…GPIRQADNQG (501 aa)) the chain is Extracellular. Residues 214 to 416 (KYVELVIVAD…GMGVCLFNLP (203 aa)) enclose the Peptidase M12B domain. Cystine bridges form between cysteine 325–cysteine 411, cysteine 367–cysteine 395, and cysteine 369–cysteine 378. Glutamate 351 is a catalytic residue. Residues histidine 354 and histidine 360 each contribute to the Zn(2+) site. 2 N-linked (GlcNAc...) asparagine glycosylation sites follow: asparagine 381 and asparagine 452. One can recognise a Disintegrin domain in the interval 424 to 510 (GQKCGNRFVE…HCPANVYLHD (87 aa)). A disulfide bridge connects residues cysteine 482 and cysteine 502. Asparagine 651 is a glycosylation site (N-linked (GlcNAc...) asparagine). The 33-residue stretch at 656 to 688 (GVHECAMQCHGRGVCNNRKNCHCEAHWAPPFCD) folds into the EGF-like domain. 3 disulfide bridges follow: cysteine 660/cysteine 670, cysteine 664/cysteine 676, and cysteine 678/cysteine 687. The chain crosses the membrane as a helical span at residues 709-729 (LTIGILVTILCLLAAGFVVYL). Topologically, residues 730-909 (KRKTLIRLLF…PRSTHTAYIK (180 aa)) are cytoplasmic. A disordered region spans residues 822–862 (LHRAPRAPSVPARPLPAKPALRQAQGTCKPNPPQKPLPADP). The short motif at 828–834 (APSVPAR) is the SH3-binding; class II element. The SH3-binding; class I motif lies at 834-841 (RPLPAKPA). Residues 851-860 (PNPPQKPLPA) show a composition bias toward pro residues. The SH3-binding; class I motif lies at 885–891 (RLAPLRP). Tyrosine 907 carries the post-translational modification Phosphotyrosine; by SRC.

As to quaternary structure, interacts with alpha-actinin-2 and with syndecans. Interacts with SH3PXD2A. Interacts with FST3. Interacts with RACK1; the interaction is required for PKC-dependent translocation of ADAM12 to the cell membrane. Requires Zn(2+) as cofactor. In terms of processing, the precursor is cleaved by a furin endopeptidase. In terms of tissue distribution, isoform 1 is expressed in placenta and skeletal, cardiac, and smooth muscle. Isoform 2 seems to be expressed only in placenta or in embryo and fetus. Both forms were expressed in some tumor cells lines. Not detected in brain, lung, liver, kidney or pancreas.

The protein resides in the cell membrane. It is found in the secreted. In terms of biological role, involved in skeletal muscle regeneration, specifically at the onset of cell fusion. Also involved in macrophage-derived giant cells (MGC) and osteoclast formation from mononuclear precursors. The chain is Disintegrin and metalloproteinase domain-containing protein 12 (ADAM12) from Homo sapiens (Human).